Here is a 304-residue protein sequence, read N- to C-terminus: Rhomboid-like protein 19 (304 aa).

6 consecutive transmembrane segments (helical) span residues 23-43 (LVVG…LALI), 58-78 (GYFE…LFMG), 93-113 (FIFV…IALY), 120-140 (VYLY…LVGI), 158-175 (WLPS…FFTL), and 179-198 (AYLP…LRYL). Residues 247-304 (SEDHDYSTSGAPLPGSDSAEASRRRERGARALEERLGTERLVPARNKDELQSDGLDNV) form a disordered region. Basic and acidic residues predominate over residues 266-284 (EASRRRERGARALEERLGT).

It belongs to the peptidase S54 family.

The protein localises to the membrane. In terms of biological role, probable rhomboid-type serine protease that catalyzes intramembrane proteolysis. The sequence is that of Rhomboid-like protein 19 from Arabidopsis thaliana (Mouse-ear cress).